Here is a 530-residue protein sequence, read N- to C-terminus: [Pyruvate dehydrogenase [acetyl-transferring]]-phosphatase 2, mitochondrial (530 aa).

The N-terminal 67 residues, 1 to 67 (MSSTASYRIF…FALRKAYRHT (67 aa)), are a transit peptide targeting the mitochondrion. Positions 107-518 (VLRFESNQLA…DDITVMVVFF (412 aa)) constitute a PPM-type phosphatase domain. Mn(2+) is bound by residues Asp-142, Gly-143, Asp-413, and Asp-509.

Belongs to the PP2C family. The cofactor is Mg(2+). As to expression, highly expressed in liver.

The protein resides in the mitochondrion. The catalysed reaction is O-phospho-L-seryl-[pyruvate dehydrogenase E1 alpha subunit] + H2O = L-seryl-[pyruvate dehydrogenase E1 alpha subunit] + phosphate. Its activity is regulated as follows. Mg(2+)-dependent protein phosphatase. Phosphatase activity is increased in the presence of spermine, a naturally produced polyamine. Functionally, mitochondrial enzyme that catalyzes the dephosphorylation and concomitant reactivation of the alpha subunit of the E1 component of the pyruvate dehydrogenase complex (PDC), thereby stimulating the conversion of pyruvate into acetyl-CoA. Acts as a crucial regulator of T cell metabolism and function, with a particular focus on T-helper Th17. The protein is [Pyruvate dehydrogenase [acetyl-transferring]]-phosphatase 2, mitochondrial (Pdp2) of Rattus norvegicus (Rat).